The following is a 468-amino-acid chain: Cysteine--tRNA ligase (468 aa).

C29 contributes to the Zn(2+) binding site. Positions 31-41 (PTVYNYIHIGN) match the 'HIGH' region motif. Zn(2+) contacts are provided by C209, H234, and E238. The 'KMSKS' region motif lies at 266 to 270 (KMSKS). K269 contributes to the ATP binding site. At S270 the chain carries Phosphoserine.

The protein belongs to the class-I aminoacyl-tRNA synthetase family. In terms of assembly, monomer. The cofactor is Zn(2+).

It localises to the cytoplasm. It carries out the reaction tRNA(Cys) + L-cysteine + ATP = L-cysteinyl-tRNA(Cys) + AMP + diphosphate. The polypeptide is Cysteine--tRNA ligase (Oceanobacillus iheyensis (strain DSM 14371 / CIP 107618 / JCM 11309 / KCTC 3954 / HTE831)).